Here is a 122-residue protein sequence, read N- to C-terminus: Ribosome-binding factor A (122 aa).

This sequence belongs to the RbfA family. In terms of assembly, monomer. Binds 30S ribosomal subunits, but not 50S ribosomal subunits or 70S ribosomes.

The protein localises to the cytoplasm. Functionally, one of several proteins that assist in the late maturation steps of the functional core of the 30S ribosomal subunit. Associates with free 30S ribosomal subunits (but not with 30S subunits that are part of 70S ribosomes or polysomes). Required for efficient processing of 16S rRNA. May interact with the 5'-terminal helix region of 16S rRNA. This is Ribosome-binding factor A from Pelagibacter ubique (strain HTCC1062).